The following is a 479-amino-acid chain: Sodium-coupled neutral amino acid transporter 5 (479 aa).

At 1-58 the chain is on the cytoplasmic side; the sequence is MAISCAVGMEMQEPKMNGTLSTGAAAGYRQEREGFLPTTHGPAPGRKPVQFLDFEGKT. A helical transmembrane segment spans residues 59–81; the sequence is SFGMSVFNLSNAIMGSGILGLAY. Residues 82 to 97 are Extracellular-facing; it reads AMAHTGVIFFLALLLC. Residues 98–118 form a helical membrane-spanning segment; that stretch reads IALLSSYSIHLLLTCASVVGI. The Cytoplasmic segment spans residues 119 to 135; that stretch reads RAYEQLGQRAFGPAGKV. A helical transmembrane segment spans residues 136-156; it reads VVAIIICLHNVGAMSSYLFII. At 157–176 the chain is on the extracellular side; sequence KSELPLVIGTFLHMDPEGDW. Residues 177-197 form a helical membrane-spanning segment; the sequence is FLKGNLLIILVSLLIILPLAL. Residues 198 to 202 are Cytoplasmic-facing; the sequence is MKHLG. Residues 203–223 traverse the membrane as a helical segment; that stretch reads YLGYTSSLSLTCMLFFLISVI. Residues 224–264 lie on the Extracellular side of the membrane; it reads YKKFQLGCVVSHNDTVVESEPAPLQAFNSSCEAKLFTVDSQ. Cysteine 231 and cysteine 254 are joined by a disulfide. Asparagine 236 is a glycosylation site (N-linked (GlcNAc...) asparagine). Residues 265-285 traverse the membrane as a helical segment; that stretch reads MSYTVPIMAFAFVCHPEVLPI. The Cytoplasmic segment spans residues 286–302; sequence YTELCCPTQRRMQAVAN. A helical transmembrane segment spans residues 303 to 323; the sequence is MSIGAMFIMYGLTATFGYLTF. The Extracellular portion of the chain corresponds to 324-341; it reads YSTVKAEMLEMYTQEDLL. A helical transmembrane segment spans residues 342 to 362; that stretch reads ILCVRLAVLLAVTLTVPVVLF. The Cytoplasmic segment spans residues 363-383; the sequence is PIRRALQQLLFPSKAFSWPRH. The helical transmembrane segment at 384-404 threads the bilayer; it reads VAIALILLILVNILVICVPTI. Over 405–406 the chain is Extracellular; sequence RD. Residues 407–427 traverse the membrane as a helical segment; sequence IFGFIGSTSAPSLIFILPSVF. Topologically, residues 428–446 are cytoplasmic; the sequence is YLRIVPADMEPLFSWPKIQ. The helical transmembrane segment at 447–467 threads the bilayer; that stretch reads ALCFGVLGVLFMAISLGFMFA. The Extracellular portion of the chain corresponds to 468-479; the sequence is NWATGQSRMSGH.

It belongs to the amino acid/polyamine transporter 2 family. In terms of tissue distribution, highly expressed in neocortex, hippocampus, striatum and spinal cord by astrocytes (at protein level). Expressed in brain, lung, stomach, kidney, spleen and testis. Expressed in the cerebral cortex between the second and third postnatal week, where expressed exclusively in glial cells from postnatal day 14 to adulthood (at protein level). Expressed in the cerebellum at post natal day 12 (P12). Expressed in liver. Expressed inside the cell body of the astrocytes.

Its subcellular location is the cell membrane. It carries out the reaction L-serine(out) + Na(+)(out) + H(+)(in) = L-serine(in) + Na(+)(in) + H(+)(out). The enzyme catalyses L-alanine(out) + Na(+)(out) + H(+)(in) = L-alanine(in) + Na(+)(in) + H(+)(out). The catalysed reaction is glycine(out) + Na(+)(out) + H(+)(in) = glycine(in) + Na(+)(in) + H(+)(out). It catalyses the reaction L-glutamine(out) + Na(+)(out) + H(+)(in) = L-glutamine(in) + Na(+)(in) + H(+)(out). It carries out the reaction L-asparagine(out) + Na(+)(out) + H(+)(in) = L-asparagine(in) + Na(+)(in) + H(+)(out). The enzyme catalyses L-histidine(out) + Na(+)(out) + H(+)(in) = L-histidine(in) + Na(+)(in) + H(+)(out). The catalysed reaction is L-cysteine(out) + Na(+)(out) + H(+)(in) = L-cysteine(in) + Na(+)(in) + H(+)(out). Not inhibited by lithium. Partial allosteric regulation on ions sodium binding. Symporter that cotransports neutral amino acids and sodium ions, coupled to an H(+) antiporter activity. Releases L-glutamine and glycine from astroglial cells and may participate in the glutamate/GABA-glutamine cycle and the NMDA receptors activation. In addition contributes significantly to L-glutamine uptake in retina, namely in ganglion and Mueller cells and, therefore participates in the retinal glutamate-glutamine cycle. The transport activity is pH sensitive, Li(+) tolerant, bidirectional and associated with large uncoupled fluxes of protons. The transport is electroneutral coupled to the cotransport of 1 Na(+) and the antiport of 1 H(+). May have particular importance for modulation of net hepatic glutamine flux. In Rattus norvegicus (Rat), this protein is Sodium-coupled neutral amino acid transporter 5.